A 272-amino-acid chain; its full sequence is Eukaryotic translation initiation factor 3 subunit G (272 aa).

Disordered stretches follow at residues 1–28 and 157–188; these read MPAL…PTEI and APTT…GRDD. The RRM domain maps to 190 to 268; that stretch reads TAIRISNLSE…LILNVEWSKP (79 aa).

Belongs to the eIF-3 subunit G family. As to quaternary structure, component of the eukaryotic translation initiation factor 3 (eIF-3) complex.

It is found in the cytoplasm. Its function is as follows. RNA-binding component of the eukaryotic translation initiation factor 3 (eIF-3) complex, which is involved in protein synthesis of a specialized repertoire of mRNAs and, together with other initiation factors, stimulates binding of mRNA and methionyl-tRNAi to the 40S ribosome. The eIF-3 complex specifically targets and initiates translation of a subset of mRNAs involved in cell proliferation. This subunit can bind 18S rRNA. This chain is Eukaryotic translation initiation factor 3 subunit G, found in Aedes aegypti (Yellowfever mosquito).